A 164-amino-acid chain; its full sequence is S-ribosylhomocysteine lyase (164 aa).

Residues His61, His65, and Cys131 each contribute to the Fe cation site.

It belongs to the LuxS family. In terms of assembly, homodimer. The cofactor is Fe cation.

It catalyses the reaction S-(5-deoxy-D-ribos-5-yl)-L-homocysteine = (S)-4,5-dihydroxypentane-2,3-dione + L-homocysteine. In terms of biological role, involved in the synthesis of autoinducer 2 (AI-2) which is secreted by bacteria and is used to communicate both the cell density and the metabolic potential of the environment. The regulation of gene expression in response to changes in cell density is called quorum sensing. Catalyzes the transformation of S-ribosylhomocysteine (RHC) to homocysteine (HC) and 4,5-dihydroxy-2,3-pentadione (DPD). This chain is S-ribosylhomocysteine lyase, found in Bifidobacterium longum subsp. infantis (strain ATCC 15697 / DSM 20088 / JCM 1222 / NCTC 11817 / S12).